The sequence spans 488 residues: UDP-N-acetylmuramate--L-alanine ligase (488 aa).

Position 127-133 (127-133) interacts with ATP; sequence GTHGKTT.

The protein belongs to the MurCDEF family.

Its subcellular location is the cytoplasm. It carries out the reaction UDP-N-acetyl-alpha-D-muramate + L-alanine + ATP = UDP-N-acetyl-alpha-D-muramoyl-L-alanine + ADP + phosphate + H(+). It functions in the pathway cell wall biogenesis; peptidoglycan biosynthesis. In terms of biological role, cell wall formation. The protein is UDP-N-acetylmuramate--L-alanine ligase of Shewanella sp. (strain MR-4).